The following is a 131-amino-acid chain: Small ribosomal subunit protein uS8 (131 aa).

Belongs to the universal ribosomal protein uS8 family. As to quaternary structure, part of the 30S ribosomal subunit. Contacts proteins S5 and S12.

Its function is as follows. One of the primary rRNA binding proteins, it binds directly to 16S rRNA central domain where it helps coordinate assembly of the platform of the 30S subunit. The sequence is that of Small ribosomal subunit protein uS8 from Solibacter usitatus (strain Ellin6076).